The following is a 238-amino-acid chain: Probable transcriptional regulatory protein SPH_2064 (238 aa).

The protein belongs to the TACO1 family. YeeN subfamily.

It localises to the cytoplasm. This chain is Probable transcriptional regulatory protein SPH_2064, found in Streptococcus pneumoniae (strain Hungary19A-6).